Here is a 686-residue protein sequence, read N- to C-terminus: UvrABC system protein C (686 aa).

Residues 1 to 14 are compositionally biased toward basic and acidic residues; it reads MVHDSTDDPDDTRV. The disordered stretch occupies residues 1 to 48; that stretch reads MVHDSTDDPDDTRVRKSRRGTALDAPPQETAPPDLDPATTGGDDEDDA. The GIY-YIG domain maps to 81–160; it reads TSPGVYRMLN…IKQLRPRFNV (80 aa). Positions 270 to 305 constitute a UVR domain; the sequence is HAVKQELAGEMEKAANELEFETAALYRDRLAALSAI.

The protein belongs to the UvrC family. As to quaternary structure, interacts with UvrB in an incision complex.

It is found in the cytoplasm. Its function is as follows. The UvrABC repair system catalyzes the recognition and processing of DNA lesions. UvrC both incises the 5' and 3' sides of the lesion. The N-terminal half is responsible for the 3' incision and the C-terminal half is responsible for the 5' incision. In Bradyrhizobium diazoefficiens (strain JCM 10833 / BCRC 13528 / IAM 13628 / NBRC 14792 / USDA 110), this protein is UvrABC system protein C.